A 153-amino-acid chain; its full sequence is Profilin (153 aa).

This sequence belongs to the profilin family. Occurs in many kinds of cells as a complex with monomeric actin in a 1:1 ratio.

Its subcellular location is the cytoplasm. It is found in the cytoskeleton. Binds to actin and affects the structure of the cytoskeleton. At high concentrations, profilin prevents the polymerization of actin, whereas it enhances it at low concentrations. By binding to PIP2, it inhibits the formation of IP3 and DG. The protein is Profilin of Tetrahymena pyriformis.